We begin with the raw amino-acid sequence, 3303 residues long: Protein unc-80 homolog (3303 aa).

Over residues 1–37 (MVTNAAGTAATGGATSNTTNNNNLQTNNNSHGANNNN) the composition is skewed to low complexity. Residues 1–43 (MVTNAAGTAATGGATSNTTNNNNLQTNNNSHGANNNNDDFDFD) form a disordered region. The chain crosses the membrane as a helical span at residues 202 to 222 (LFSVPTITLFVYLFAPIIHHL). 7 disordered regions span residues 284 to 316 (LSADAMSPKADSPQSGISDYGRQDEEGSWVSSP), 361 to 422 (LQQQ…SESI), 491 to 512 (LYQGPGSNSRDSPGSSVVKDYI), 526 to 546 (AEEPQSAPSTTERRGSEKKKR), 1036 to 1067 (FRRRTTGVRPTLTPRHSERALLSDSTSSSERN), 1443 to 1563 (LHEP…DDTA), and 1627 to 1671 (VEPT…KDRI). The span at 361–377 (LQQQQSQSRRGSRQSMN) shows a compositional bias: low complexity. 2 stretches are compositionally biased toward basic and acidic residues: residues 378-391 (SRDKDKVPSTKFEF) and 401-422 (SMKEKRSASIEKETDSDKSESI). Positions 495 to 505 (PGSNSRDSPGS) are enriched in polar residues. Polar residues predominate over residues 1058-1067 (SDSTSSSERN). Over residues 1490 to 1499 (FKRRSLKLRR) the composition is skewed to basic residues. A compositionally biased stretch (polar residues) spans 1546 to 1556 (DDQQPESPTDS). Basic and acidic residues predominate over residues 1660 to 1671 (KRKDSLSRKDRI). The next 3 helical transmembrane spans lie at 1969–1989 (VYEIAYQVIWVCLVEESALFL), 2018–2038 (LPQQAAFALYNSIIGYIMFYV), and 2048–2068 (LVGSALSVLWMVVHSVHGIMF). Disordered stretches follow at residues 2518 to 2550 (NGPYRNSPEHKGSSQRNCSRGPPCSPGLDFEEE), 3003 to 3158 (EEKR…FKAQ), and 3170 to 3262 (FRHS…YRDN). Basic and acidic residues predominate over residues 3003 to 3018 (EEKRYDRESSEQKKSD). Composition is skewed to polar residues over residues 3033-3053 (QRPSLISIFTGTTTGQASHSH) and 3071-3106 (PSDTLSQQTLHPPRESLSSSSTGRDPHTTTSESQSG). Residues 3124–3134 (SGHGSGGGIGT) show a composition bias toward gly residues. Residues 3135 to 3152 (GAASAVPSHLSHSQSLQQ) show a composition bias toward low complexity. The span at 3198 to 3217 (SRLQRSKAASRKTFRLKRSR) shows a compositional bias: basic residues. The span at 3226–3239 (IVTSQEEQAPQAQA) shows a compositional bias: polar residues. Positions 3246 to 3257 (SWDSVSQTSSTS) are enriched in low complexity.

Belongs to the unc-80 family. Interacts with unc79 and na. Can interact with unc79 independently of na.

It is found in the membrane. In terms of biological role, component of the na (narrow abdomen) sodium channel complex. In the circadian clock neurons it functions with na and unc79 to promote circadian rhythmicity. This chain is Protein unc-80 homolog, found in Drosophila melanogaster (Fruit fly).